A 141-amino-acid chain; its full sequence is Large ribosomal subunit protein uL11 (141 aa).

The protein belongs to the universal ribosomal protein uL11 family. Part of the ribosomal stalk of the 50S ribosomal subunit. Interacts with L10 and the large rRNA to form the base of the stalk. L10 forms an elongated spine to which L12 dimers bind in a sequential fashion forming a multimeric L10(L12)X complex. One or more lysine residues are methylated.

Functionally, forms part of the ribosomal stalk which helps the ribosome interact with GTP-bound translation factors. The chain is Large ribosomal subunit protein uL11 from Streptococcus sanguinis (strain SK36).